The chain runs to 209 residues: 3-demethoxyubiquinol 3-hydroxylase (209 aa).

Fe cation contacts are provided by glutamate 58, glutamate 88, histidine 91, glutamate 140, glutamate 172, and histidine 175.

This sequence belongs to the COQ7 family. Fe cation is required as a cofactor.

The protein localises to the cell membrane. The enzyme catalyses a 5-methoxy-2-methyl-3-(all-trans-polyprenyl)benzene-1,4-diol + AH2 + O2 = a 3-demethylubiquinol + A + H2O. The protein operates within cofactor biosynthesis; ubiquinone biosynthesis. In terms of biological role, catalyzes the hydroxylation of 2-nonaprenyl-3-methyl-6-methoxy-1,4-benzoquinol during ubiquinone biosynthesis. This Polaromonas naphthalenivorans (strain CJ2) protein is 3-demethoxyubiquinol 3-hydroxylase.